The chain runs to 429 residues: Cholesterol 7-desaturase nvd (429 aa).

A helical membrane pass occupies residues 23–43 (FVICLWTLAVTFIRIYWIFFV). A Rieske domain is found at 98 to 201 (YGILKSSQLK…SQEVDGFIFI (104 aa)). [2Fe-2S] cluster contacts are provided by cysteine 138, histidine 140, cysteine 158, and histidine 161.

The protein belongs to the cholesterol 7-desaturase family. [2Fe-2S] cluster is required as a cofactor. Expressed predominantly in the prothoracic gland and weakly in brain and malpighian tubules.

It is found in the membrane. It catalyses the reaction cholesterol + NADPH + O2 + H(+) = 7-dehydrocholesterol + NADP(+) + 2 H2O. The catalysed reaction is cholesterol + NADH + O2 + H(+) = 7-dehydrocholesterol + NAD(+) + 2 H2O. It participates in steroid hormone biosynthesis; dafachronic acid biosynthesis. Catalyzes the production of 7-dehydrocholesterol (7-DHC or cholesta-5,7-dien-3beta-ol) by inserting a double bond (desaturating) at the C7-C8 single bond of cholesterol. Essential regulator of steroid biosynthesis, as this reaction is the first step in the synthesis of the steroid hormone Delta(7)-dafachronic acid. Required for insect molting, metamorphosis and body growth throughout development via the regulation of ecdysteroid biosynthesis in the prothoracic gland. The sequence is that of Cholesterol 7-desaturase nvd from Drosophila melanogaster (Fruit fly).